A 366-amino-acid chain; its full sequence is Phosphoserine aminotransferase (366 aa).

Residue R42 coordinates L-glutamate. Pyridoxal 5'-phosphate contacts are provided by residues A76–T77, W101, T156, D178, and Q201. At K202 the chain carries N6-(pyridoxal phosphate)lysine. Position 243-244 (N243–T244) interacts with pyridoxal 5'-phosphate.

Belongs to the class-V pyridoxal-phosphate-dependent aminotransferase family. SerC subfamily. In terms of assembly, homodimer. Pyridoxal 5'-phosphate is required as a cofactor.

The protein resides in the cytoplasm. It catalyses the reaction O-phospho-L-serine + 2-oxoglutarate = 3-phosphooxypyruvate + L-glutamate. It carries out the reaction 4-(phosphooxy)-L-threonine + 2-oxoglutarate = (R)-3-hydroxy-2-oxo-4-phosphooxybutanoate + L-glutamate. Its pathway is amino-acid biosynthesis; L-serine biosynthesis; L-serine from 3-phospho-D-glycerate: step 2/3. It functions in the pathway cofactor biosynthesis; pyridoxine 5'-phosphate biosynthesis; pyridoxine 5'-phosphate from D-erythrose 4-phosphate: step 3/5. Its function is as follows. Catalyzes the reversible conversion of 3-phosphohydroxypyruvate to phosphoserine and of 3-hydroxy-2-oxo-4-phosphonooxybutanoate to phosphohydroxythreonine. This Aromatoleum aromaticum (strain DSM 19018 / LMG 30748 / EbN1) (Azoarcus sp. (strain EbN1)) protein is Phosphoserine aminotransferase.